The sequence spans 291 residues: ATP synthase gamma chain (291 aa).

This sequence belongs to the ATPase gamma chain family. F-type ATPases have 2 components, CF(1) - the catalytic core - and CF(0) - the membrane proton channel. CF(1) has five subunits: alpha(3), beta(3), gamma(1), delta(1), epsilon(1). CF(0) has three main subunits: a, b and c.

The protein resides in the cell inner membrane. Its function is as follows. Produces ATP from ADP in the presence of a proton gradient across the membrane. The gamma chain is believed to be important in regulating ATPase activity and the flow of protons through the CF(0) complex. This chain is ATP synthase gamma chain, found in Neisseria gonorrhoeae (strain NCCP11945).